Here is a 293-residue protein sequence, read N- to C-terminus: Exosome complex component RRP4 (293 aa).

The S1 motif domain occupies 79-159; it reads EVGDIVVGRI…SDGAVSLHTR (81 aa). The residue at position 124 (S124) is a Phosphoserine.

This sequence belongs to the RRP4 family. As to quaternary structure, component of the RNA exosome core complex (Exo-9), composed of EXOSC1, EXOSC2, EXOSC3, EXOSC4, EXOSC5, EXOSC6, EXOSC7, EXOSC8 and EXOSC9; within the complex interacts with EXOSC4 and EXOSC7. The catalytically inactive RNA exosome core complex (Exo-9) associates with the catalytic subunit EXOSC10/RRP6. Exo-9 may associate with DIS3 to form the nucleolar exosome complex, or DIS3L to form the cytoplasmic exosome complex. Exo-9 is formed by a hexameric base ring consisting of the heterodimers EXOSC4-EXOSC9, EXOSC5-EXOSC8 and EXOSC6-EXOSC7, and a cap ring consisting of EXOSC1, EXOSC2 and EXOSC3. The RNA exosome complex associates with cofactors C1D/RRP47, MPHOSPH6/MPP6 and MTREX/MTR4. Interacts with GTPBP1. Interacts with ZFP36L1 (via N-terminus).

Its subcellular location is the cytoplasm. It localises to the nucleus. The protein localises to the nucleolus. In terms of biological role, non-catalytic component of the RNA exosome complex which has 3'-&gt;5' exoribonuclease activity and participates in a multitude of cellular RNA processing and degradation events. In the nucleus, the RNA exosome complex is involved in proper maturation of stable RNA species such as rRNA, snRNA and snoRNA, in the elimination of RNA processing by-products and non-coding 'pervasive' transcripts, such as antisense RNA species and promoter-upstream transcripts (PROMPTs), and of mRNAs with processing defects, thereby limiting or excluding their export to the cytoplasm. The RNA exosome may be involved in Ig class switch recombination (CSR) and/or Ig variable region somatic hypermutation (SHM) by targeting AICDA deamination activity to transcribed dsDNA substrates. In the cytoplasm, the RNA exosome complex is involved in general mRNA turnover and specifically degrades inherently unstable mRNAs containing AU-rich elements (AREs) within their 3' untranslated regions, and in RNA surveillance pathways, preventing translation of aberrant mRNAs. It seems to be involved in degradation of histone mRNA. The catalytic inactive RNA exosome core complex of 9 subunits (Exo-9) is proposed to play a pivotal role in the binding and presentation of RNA for ribonucleolysis, and to serve as a scaffold for the association with catalytic subunits and accessory proteins or complexes. EXOSC2 as peripheral part of the Exo-9 complex stabilizes the hexameric ring of RNase PH-domain subunits through contacts with EXOSC4 and EXOSC7. In Bos taurus (Bovine), this protein is Exosome complex component RRP4 (EXOSC2).